Consider the following 323-residue polypeptide: Queuosine 5'-phosphate N-glycosylase/hydrolase (323 aa).

8 residues coordinate queuosine 5'-phosphate: N72, Y93, K199, F229, D231, D298, W302, and Q306. D231 serves as the catalytic Nucleophile or transition state stabilizer.

This sequence belongs to the QNG1 protein family. As to quaternary structure, monomer.

The catalysed reaction is queuosine 5'-phosphate + H2O = queuine + D-ribose 5-phosphate. Its function is as follows. Catalyzes the hydrolysis of queuosine 5'-phosphate, releasing the nucleobase queuine (q). Is likely required for salvage of queuine from exogenous queuosine (Q) that is imported and then converted to queuosine 5'-phosphate intracellularly. In vitro, can also catalyze the release of the q base directly from Q as substrate; however, Q may not be the biologically relevant substrate. Shows a very low activity on queuosine 3',5'-diphosphate, and cannot release q from queuosine 3'-phosphate and from the 5'-nucleotides AMP, UMP, CMP or GMP, indicating specificity for the queuine base. The protein is Queuosine 5'-phosphate N-glycosylase/hydrolase of Sphaerobacter thermophilus (strain ATCC 49802 / DSM 20745 / KCCM 41009 / NCIMB 13125 / S 6022).